The sequence spans 269 residues: Formamidopyrimidine-DNA glycosylase (269 aa).

Pro-2 acts as the Schiff-base intermediate with DNA in catalysis. Glu-3 acts as the Proton donor in catalysis. Lys-57 (proton donor; for beta-elimination activity) is an active-site residue. Residues His-90, Arg-109, and Lys-150 each coordinate DNA. The FPG-type zinc-finger motif lies at 235 to 269 (QVYGRKGEPCRVCGTPIVATKHAQRATFYCRQCQK). The Proton donor; for delta-elimination activity role is filled by Arg-259.

It belongs to the FPG family. In terms of assembly, monomer. Zn(2+) serves as cofactor.

It carries out the reaction Hydrolysis of DNA containing ring-opened 7-methylguanine residues, releasing 2,6-diamino-4-hydroxy-5-(N-methyl)formamidopyrimidine.. It catalyses the reaction 2'-deoxyribonucleotide-(2'-deoxyribose 5'-phosphate)-2'-deoxyribonucleotide-DNA = a 3'-end 2'-deoxyribonucleotide-(2,3-dehydro-2,3-deoxyribose 5'-phosphate)-DNA + a 5'-end 5'-phospho-2'-deoxyribonucleoside-DNA + H(+). In terms of biological role, involved in base excision repair of DNA damaged by oxidation or by mutagenic agents. Acts as a DNA glycosylase that recognizes and removes damaged bases. Has a preference for oxidized purines, such as 7,8-dihydro-8-oxoguanine (8-oxoG). Has AP (apurinic/apyrimidinic) lyase activity and introduces nicks in the DNA strand. Cleaves the DNA backbone by beta-delta elimination to generate a single-strand break at the site of the removed base with both 3'- and 5'-phosphates. This is Formamidopyrimidine-DNA glycosylase from Escherichia coli O6:K15:H31 (strain 536 / UPEC).